Here is a 486-residue protein sequence, read N- to C-terminus: MKKLLHLFFPLSLRVRFLLATAAVVLVLSLAYGMVALIGYSVSFDKTTFRLLRGESNLFYTLAKWENNKLHVELPENIDKQSPTMTLIYDENGQLLWAQRDVPWLMKMIQPDWLKSNGFHEIEADVNDTSLLLSGDHSIQQQLQEVREDDDDAEMTHSVAVNVYPATSRMPKLTIVVVDTIPVELKSSYMVWSWFIYVLSANLLLVIPLLWVAAWWSLRPIEALAKEVRELEEHNRELLNPATTRELTSLVRNLNRLLKSERERYDKYRTTLTDLTHSLKTPLAVLQSTLRSLRSEKMSVSDAEPVMLEQISRISQQIGYYLHRASMRGGTLLSRELHPVAPLLDNLTSALNKVYQRKGVNISLDISPEISFVGEQNDFVEVMGNVLDNACKYCLEFVEISARQTDEHLYIVVEDDGPGIPLSKREVIFDRGQRVDTLRPGQGVGLAVAREITEQYEGKIVAGESMLGGARMEVIFGRQHSAPKDE.

The Cytoplasmic portion of the chain corresponds to Met1 to Arg16. The helical transmembrane segment at Phe17–Leu37 threads the bilayer. Residues Ile38–Trp194 are Periplasmic-facing. Positions 151 and 152 each coordinate a divalent metal cation. A helical membrane pass occupies residues Phe195–Trp215. Residues Trp215 to Asp266 enclose the HAMP domain. Topologically, residues Trp216–Glu486 are cytoplasmic. In terms of domain architecture, Histidine kinase spans Asp274–His480. Phosphohistidine; by autocatalysis is present on His277. Asn385 is a Mg(2+) binding site. Residues Asn385 to Tyr393, Asp415 to Ile420, and Arg434 to Leu446 each bind ATP. Gln442 provides a ligand contact to Mg(2+).

As to quaternary structure, homodimer.

It localises to the cell inner membrane. It carries out the reaction ATP + protein L-histidine = ADP + protein N-phospho-L-histidine.. Functionally, member of the two-component regulatory system PhoP/PhoQ involved in virulence, adaptation to low Mg(2+) environments and the control of acid resistance genes. In low periplasmic Mg(2+), PhoQ functions as a membrane-associated protein kinase that undergoes autophosphorylation and subsequently transfers the phosphate to PhoP, resulting in the expression of PhoP-activated genes (PAG) and repression of PhoP-repressed genes (PRG). In high periplasmic Mg(2+), acts as a protein phosphatase that dephosphorylates phospho-PhoP, which results in the repression of PG and may lead to expression of some PRG. This chain is Sensor protein PhoQ (phoQ), found in Escherichia coli O6:H1 (strain CFT073 / ATCC 700928 / UPEC).